The sequence spans 401 residues: Probable tRNA sulfurtransferase (401 aa).

Residues 60-165 form the THUMP domain; that stretch reads EPISEQLKGV…EQATYITFKD (106 aa). Residues 183-184, 208-209, arginine 265, glycine 287, and glutamine 296 each bind ATP; these read ML and HF.

It belongs to the ThiI family.

It is found in the cytoplasm. The catalysed reaction is [ThiI sulfur-carrier protein]-S-sulfanyl-L-cysteine + a uridine in tRNA + 2 reduced [2Fe-2S]-[ferredoxin] + ATP + H(+) = [ThiI sulfur-carrier protein]-L-cysteine + a 4-thiouridine in tRNA + 2 oxidized [2Fe-2S]-[ferredoxin] + AMP + diphosphate. It carries out the reaction [ThiS sulfur-carrier protein]-C-terminal Gly-Gly-AMP + S-sulfanyl-L-cysteinyl-[cysteine desulfurase] + AH2 = [ThiS sulfur-carrier protein]-C-terminal-Gly-aminoethanethioate + L-cysteinyl-[cysteine desulfurase] + A + AMP + 2 H(+). It participates in cofactor biosynthesis; thiamine diphosphate biosynthesis. Functionally, catalyzes the ATP-dependent transfer of a sulfur to tRNA to produce 4-thiouridine in position 8 of tRNAs, which functions as a near-UV photosensor. Also catalyzes the transfer of sulfur to the sulfur carrier protein ThiS, forming ThiS-thiocarboxylate. This is a step in the synthesis of thiazole, in the thiamine biosynthesis pathway. The sulfur is donated as persulfide by IscS. The chain is Probable tRNA sulfurtransferase from Bacillus pumilus (strain SAFR-032).